We begin with the raw amino-acid sequence, 236 residues long: UPF0502 protein Bcen2424_5610 (236 aa).

It belongs to the UPF0502 family.

This is UPF0502 protein Bcen2424_5610 from Burkholderia cenocepacia (strain HI2424).